A 147-amino-acid chain; its full sequence is Protein J1 homolog (147 aa).

It belongs to the chordopoxvirinae J1 family. As to quaternary structure, homodimer. Part of a complex composed of A30, G7, F10 kinase, A15, D2, D3, and J1. Interacts with A45.

It is found in the virion. It localises to the host cytoplasm. Late protein which is a part of a large complex required for early virion morphogenesis. This complex participates in the formation of virosomes and the incorporation of virosomal contents into nascent immature virions. J1 protein is required for DNA packaging during immature virions (IV) formation. In Sheeppox virus (strain KS-1) (SPPV), this protein is Protein J1 homolog.